Consider the following 1004-residue polypeptide: Presequence protease, mitochondrial (1004 aa).

The transit peptide at 1-34 directs the protein to the mitochondrion; sequence MLRNAAAGARKAVTELSQFPKPGEKLHGFTLVRS. H84 provides a ligand contact to Zn(2+). Catalysis depends on E87, which acts as the Proton acceptor. H88 provides a ligand contact to Zn(2+). The active site involves E160. Zn(2+) is bound at residue E188.

It belongs to the peptidase M16 family. PreP subfamily. Monomer and homodimer; homodimerization is induced by binding of the substrate. Zn(2+) serves as cofactor.

It is found in the mitochondrion intermembrane space. The protein resides in the mitochondrion matrix. Degrades mitochondrial transit peptides after their cleavage in the intermembrane space or in the matrix, and presequence peptides; clearance of these peptides is required to keep the presequence processing machinery running. Preferentially cleaves the N-terminal side of paired basic amino acid residues. Also degrades other unstructured peptides. May function as an ATP-dependent peptidase as opposed to a metalloendopeptidase. In Gibberella zeae (strain ATCC MYA-4620 / CBS 123657 / FGSC 9075 / NRRL 31084 / PH-1) (Wheat head blight fungus), this protein is Presequence protease, mitochondrial (CYM1).